We begin with the raw amino-acid sequence, 176 residues long: Ribosome maturation factor RimM (176 aa).

Positions 97 to 176 (EDEFYWRDLI…QILVDWDPDF (80 aa)) constitute a PRC barrel domain.

It belongs to the RimM family. Binds ribosomal protein uS19.

It localises to the cytoplasm. Functionally, an accessory protein needed during the final step in the assembly of 30S ribosomal subunit, possibly for assembly of the head region. Essential for efficient processing of 16S rRNA. May be needed both before and after RbfA during the maturation of 16S rRNA. It has affinity for free ribosomal 30S subunits but not for 70S ribosomes. The polypeptide is Ribosome maturation factor RimM (Shewanella sp. (strain ANA-3)).